The primary structure comprises 320 residues: Malate dehydrogenase (320 aa).

Residues 10-15 (GAGQIG) and aspartate 34 contribute to the NAD(+) site. The substrate site is built by arginine 83 and arginine 89. NAD(+) contacts are provided by residues asparagine 96 and 119–121 (ITN). Residues asparagine 121 and arginine 152 each contribute to the substrate site. Histidine 176 functions as the Proton acceptor in the catalytic mechanism.

The protein belongs to the LDH/MDH superfamily. MDH type 3 family.

It catalyses the reaction (S)-malate + NAD(+) = oxaloacetate + NADH + H(+). In terms of biological role, catalyzes the reversible oxidation of malate to oxaloacetate. This is Malate dehydrogenase from Jannaschia sp. (strain CCS1).